Here is a 589-residue protein sequence, read N- to C-terminus: Guanylate-binding protein 2 (589 aa).

Positions 1-309 (MASEIHMSEP…GAISNGSLPC (309 aa)) are GTPase domain (Globular). The GB1/RHD3-type G domain maps to 35-276 (TQPVVVVAIV…FTSYILSYSS (242 aa)). Residues 45–52 (GLYRTGKS), 181–182 (RD), and Leu-245 each bind GTP. Cys-586 bears the Cysteine methyl ester mark. Cys-586 is lipidated: S-geranylgeranyl cysteine. A propeptide spans 587-589 (TIL) (removed in mature form).

The protein belongs to the TRAFAC class dynamin-like GTPase superfamily. GB1/RHD3 GTPase family. GB1 subfamily. Homodimer; homodimerization occurs upon GTP-binding and is required for the association with membranous structures. Heterodimer with other family members, including GBP1, GBP3, GBP4 and GBP5. Isoprenylation is required for proper subcellular location.

Its subcellular location is the cytoplasmic vesicle membrane. It localises to the golgi apparatus membrane. The protein localises to the cytoplasm. It is found in the perinuclear region. It catalyses the reaction GTP + H2O = GDP + phosphate + H(+). Functionally, interferon (IFN)-inducible GTPase that plays important roles in innate immunity against a diverse range of bacterial, viral and protozoan pathogens. Hydrolyzes GTP to GMP in 2 consecutive cleavage reactions, but the major reaction product is GDP. Following infection, recruited to the pathogen-containing vacuoles or vacuole-escaped bacteria and acts as a positive regulator of inflammasome assembly by promoting the release of inflammasome ligands from bacteria. Acts by promoting lysis of pathogen-containing vacuoles, releasing pathogens into the cytosol. Following pathogen release in the cytosol, promotes recruitment of proteins that mediate bacterial cytolysis, such as Gm12250/Irgb10: this liberates ligands that are detected by inflammasomes, such as lipopolysaccharide (LPS) that activates the non-canonical CASP4/CASP11 inflammasome or double-stranded DNA (dsDNA) that activates the AIM2 inflammasome. Confers protection to the protozoan pathogen Toxoplasma gondii. Independently of its GTPase activity, acts as an inhibitor of various viruses infectivity by inhibiting FURIN-mediated maturation of viral envelope proteins. The polypeptide is Guanylate-binding protein 2 (Mus musculus (Mouse)).